Consider the following 638-residue polypeptide: MFIKRSDYASAYLKIKEASVSGGCTVQLFVALDPDALCACKLLSTLLKGDFISHKIRPVSGYRDLEQANKTLLEQNEDIKFIILLNCGTMVDLNNYLVSMEDVSIYVIDSHRPHNLNNIYIENNIFVFDDGDIEEDMNKIHDAWYAFNSHELSDEENSDSSNEREEEVEDDNRSVESYSSSDYQARSRRRFSEETTQRRAEIKEKRKKRKEFASILSEYYEKGSWYGESITNILFAVASMLGREDNDMLWLAIVGLTCLEIHCQSSKKYFNRSYSLLKDEVNRLNPSPLENQIVGRAHGKTPHDQSIRLEDEFRFMLVRHWSLYDSMLHSAYVGSRLHIWSEEGRKRLHKLLAKMGLSLVECKQTYIHMNMDLKKTLKSSLKRFAPFYGLDDVIFHSFTRTYGFKCTLSASDVSYAISALLEMGNTGVLLQSKTVARSPDMTEEEYLEKFENAQNQEWLHNFYDAYDALDDVDSLERALKLAMHLQRAIVRTGITLLEKRAIKTLRSFRFGLINEGPDLKIFMHPLALTKMSLWIAEAINEQEREFGKLRHLPLVLAAFVEEKNRYLIVGTSTSAFTSNEDDDDDDGHGHNRFGVAFQEVANMTSATLQMDCFEASVIECQKSDLGVFLESLSFKTLL.

The interval 151–204 is disordered; that stretch reads ELSDEENSDSSNEREEEVEDDNRSVESYSSSDYQARSRRRFSEETTQRRAEIKE. Positions 153-170 are enriched in acidic residues; it reads SDEENSDSSNEREEEVED. Basic and acidic residues predominate over residues 190–204; it reads RFSEETTQRRAEIKE.

This sequence belongs to the CDC45 family. In terms of assembly, interacts with sld3.

The protein resides in the nucleus. Its function is as follows. Required for initiation of chromosomal DNA replication. May have a role in regulating the MCM proteins nda1 and nda4. The protein is Cell division control protein 45 homolog (sna41) of Schizosaccharomyces pombe (strain 972 / ATCC 24843) (Fission yeast).